The primary structure comprises 220 residues: Large ribosomal subunit protein uL16 (220 aa).

The protein belongs to the universal ribosomal protein uL16 family. Component of the small ribosomal subunit. Mature ribosomes consist of a small (40S) and a large (60S) subunit. The 40S subunit contains about 33 different proteins and 1 molecule of RNA (18S). The 60S subunit contains about 49 different proteins and 3 molecules of RNA (25S, 5.8S and 5S).

This chain is Large ribosomal subunit protein uL16 (RPL10), found in Euphorbia esula (Leafy spurge).